Here is a 388-residue protein sequence, read N- to C-terminus: Succinate--CoA ligase [ADP-forming] subunit beta (388 aa).

Positions 9–244 (KEILRKFGVA…LDEEDPAEIE (236 aa)) constitute an ATP-grasp domain. Residues Lys-46, 53–55 (GRG), Glu-99, Ala-102, and Glu-107 each bind ATP. Mg(2+)-binding residues include Asn-199 and Asp-213. Substrate-binding positions include Asn-264 and 321-323 (GIM).

It belongs to the succinate/malate CoA ligase beta subunit family. Heterotetramer of two alpha and two beta subunits. The cofactor is Mg(2+).

The enzyme catalyses succinate + ATP + CoA = succinyl-CoA + ADP + phosphate. It catalyses the reaction GTP + succinate + CoA = succinyl-CoA + GDP + phosphate. It functions in the pathway carbohydrate metabolism; tricarboxylic acid cycle; succinate from succinyl-CoA (ligase route): step 1/1. Succinyl-CoA synthetase functions in the citric acid cycle (TCA), coupling the hydrolysis of succinyl-CoA to the synthesis of either ATP or GTP and thus represents the only step of substrate-level phosphorylation in the TCA. The beta subunit provides nucleotide specificity of the enzyme and binds the substrate succinate, while the binding sites for coenzyme A and phosphate are found in the alpha subunit. This chain is Succinate--CoA ligase [ADP-forming] subunit beta, found in Burkholderia multivorans (strain ATCC 17616 / 249).